Here is a 113-residue protein sequence, read N- to C-terminus: Hydrogenase maturation factor HypA (113 aa).

H2 contributes to the Ni(2+) binding site. 4 residues coordinate Zn(2+): C73, C76, C89, and C92.

This sequence belongs to the HypA/HybF family.

Involved in the maturation of [NiFe] hydrogenases. Required for nickel insertion into the metal center of the hydrogenase. This Cereibacter sphaeroides (strain ATCC 17023 / DSM 158 / JCM 6121 / CCUG 31486 / LMG 2827 / NBRC 12203 / NCIMB 8253 / ATH 2.4.1.) (Rhodobacter sphaeroides) protein is Hydrogenase maturation factor HypA.